The primary structure comprises 190 residues: Xanthine phosphoribosyltransferase 2 (190 aa).

2 residues coordinate xanthine: leucine 20 and asparagine 27. 129 to 133 (ANGCA) lines the 5-phospho-alpha-D-ribose 1-diphosphate pocket. Residue lysine 157 participates in xanthine binding.

Belongs to the purine/pyrimidine phosphoribosyltransferase family. Xpt subfamily. Homodimer.

It is found in the cytoplasm. It catalyses the reaction XMP + diphosphate = xanthine + 5-phospho-alpha-D-ribose 1-diphosphate. It functions in the pathway purine metabolism; XMP biosynthesis via salvage pathway; XMP from xanthine: step 1/1. Functionally, converts the preformed base xanthine, a product of nucleic acid breakdown, to xanthosine 5'-monophosphate (XMP), so it can be reused for RNA or DNA synthesis. This is Xanthine phosphoribosyltransferase 2 from Clostridium botulinum (strain ATCC 19397 / Type A).